A 710-amino-acid polypeptide reads, in one-letter code: Probable GTP diphosphokinase RSH2, chloroplastic (710 aa).

The N-terminal 63 residues, 1–63 (MVVATTIALY…SSLFSSASVK (63 aa)), are a transit peptide targeting the chloroplast. Residues 233–337 (YLQHCVETAM…IKLADRLHNM (105 aa)) form the HD domain.

The protein belongs to the RelA/SpoT family.

The protein resides in the plastid. The protein localises to the chloroplast. It carries out the reaction GTP + ATP = guanosine 3'-diphosphate 5'-triphosphate + AMP. Functionally, probable ppGpp (guanosine 3'-diphosphate 5'-diphosphate) synthetase that may be involved in a rapid plant ppGpp-mediated response to pathogens and other stresses. The polypeptide is Probable GTP diphosphokinase RSH2, chloroplastic (RSH2) (Arabidopsis thaliana (Mouse-ear cress)).